We begin with the raw amino-acid sequence, 372 residues long: Glutamate 5-kinase (372 aa).

Lys-14 contributes to the ATP binding site. The substrate site is built by Ser-54, Asp-141, and Asn-153. Thr-173–Asp-174 contacts ATP. The PUA domain occupies Ala-280–Val-358.

This sequence belongs to the glutamate 5-kinase family.

It is found in the cytoplasm. It carries out the reaction L-glutamate + ATP = L-glutamyl 5-phosphate + ADP. It functions in the pathway amino-acid biosynthesis; L-proline biosynthesis; L-glutamate 5-semialdehyde from L-glutamate: step 1/2. Functionally, catalyzes the transfer of a phosphate group to glutamate to form L-glutamate 5-phosphate. In Herminiimonas arsenicoxydans, this protein is Glutamate 5-kinase.